Reading from the N-terminus, the 89-residue chain is Small ribosomal subunit protein uS15 (89 aa).

Belongs to the universal ribosomal protein uS15 family. As to quaternary structure, part of the 30S ribosomal subunit. Forms a bridge to the 50S subunit in the 70S ribosome, contacting the 23S rRNA.

Its function is as follows. One of the primary rRNA binding proteins, it binds directly to 16S rRNA where it helps nucleate assembly of the platform of the 30S subunit by binding and bridging several RNA helices of the 16S rRNA. Forms an intersubunit bridge (bridge B4) with the 23S rRNA of the 50S subunit in the ribosome. The protein is Small ribosomal subunit protein uS15 of Beijerinckia indica subsp. indica (strain ATCC 9039 / DSM 1715 / NCIMB 8712).